The following is a 338-amino-acid chain: GDSL esterase/lipase At5g63170 (338 aa).

Positions 1–23 (MNSLVIQTTIVLVSVISVSIVHA) are cleaved as a signal peptide. Residue S35 is the Nucleophile of the active site. Active-site residues include D313 and H316.

This sequence belongs to the 'GDSL' lipolytic enzyme family.

It is found in the secreted. This is GDSL esterase/lipase At5g63170 from Arabidopsis thaliana (Mouse-ear cress).